A 274-amino-acid chain; its full sequence is Formamidopyrimidine-DNA glycosylase (274 aa).

The active-site Schiff-base intermediate with DNA is the Pro2. Glu3 functions as the Proton donor in the catalytic mechanism. The Proton donor; for beta-elimination activity role is filled by Lys58. The DNA site is built by His91, Arg110, and Lys152. The FPG-type zinc finger occupies 237–271 (KVYGRKNLPCLVCENKIETVVIAGRHSAFCPHCQP). Catalysis depends on Arg261, which acts as the Proton donor; for delta-elimination activity.

The protein belongs to the FPG family. Monomer. Requires Zn(2+) as cofactor.

The enzyme catalyses Hydrolysis of DNA containing ring-opened 7-methylguanine residues, releasing 2,6-diamino-4-hydroxy-5-(N-methyl)formamidopyrimidine.. The catalysed reaction is 2'-deoxyribonucleotide-(2'-deoxyribose 5'-phosphate)-2'-deoxyribonucleotide-DNA = a 3'-end 2'-deoxyribonucleotide-(2,3-dehydro-2,3-deoxyribose 5'-phosphate)-DNA + a 5'-end 5'-phospho-2'-deoxyribonucleoside-DNA + H(+). Involved in base excision repair of DNA damaged by oxidation or by mutagenic agents. Acts as a DNA glycosylase that recognizes and removes damaged bases. Has a preference for oxidized purines, such as 7,8-dihydro-8-oxoguanine (8-oxoG). Has AP (apurinic/apyrimidinic) lyase activity and introduces nicks in the DNA strand. Cleaves the DNA backbone by beta-delta elimination to generate a single-strand break at the site of the removed base with both 3'- and 5'-phosphates. The protein is Formamidopyrimidine-DNA glycosylase of Legionella pneumophila (strain Paris).